The primary structure comprises 677 residues: Methionine--tRNA ligase (677 aa).

Positions Pro15–His25 match the 'HIGH' region motif. 4 residues coordinate Zn(2+): Cys146, Cys149, Cys159, and Cys162. The 'KMSKS' region signature appears at Lys333 to Ser337. Residue Lys336 participates in ATP binding. One can recognise a tRNA-binding domain in the interval Asp575–Lys677.

It belongs to the class-I aminoacyl-tRNA synthetase family. MetG type 1 subfamily. In terms of assembly, homodimer. It depends on Zn(2+) as a cofactor.

It localises to the cytoplasm. The enzyme catalyses tRNA(Met) + L-methionine + ATP = L-methionyl-tRNA(Met) + AMP + diphosphate. Functionally, is required not only for elongation of protein synthesis but also for the initiation of all mRNA translation through initiator tRNA(fMet) aminoacylation. This chain is Methionine--tRNA ligase, found in Klebsiella pneumoniae subsp. pneumoniae (strain ATCC 700721 / MGH 78578).